The primary structure comprises 371 residues: Galanin receptor type 2 (371 aa).

Topologically, residues 1–27 (MNGSDSQGAEDSSQEGGGGWQPEAVLV) are extracellular. N-linked (GlcNAc...) asparagine glycosylation is present at Asn-2. Residues 28 to 48 (PLFFALIFLVGAVGNALVLAV) form a helical membrane-spanning segment. The Cytoplasmic segment spans residues 49-59 (LLRGGQAVSTT). A helical transmembrane segment spans residues 60–80 (NLFILNLGVADLCFILCCVPF). The Extracellular segment spans residues 81 to 98 (QATIYTLDDWVFGSLLCK). A disulfide bridge connects residues Cys-97 and Cys-174. A helical transmembrane segment spans residues 99–120 (AVHFLIFLTMHASSFTLAAVSL). Over 121–140 (DRYLAIRYPLHSRELRTPRN) the chain is Cytoplasmic. A helical membrane pass occupies residues 141–161 (ALAAIGLIWGLALLFSGPYLS). At 162-186 (YYSQSQLANLTVCHPAWSAPRRRAM) the chain is on the extracellular side. A helical transmembrane segment spans residues 187-207 (DLCTFVFSYLLPVLVLSLTYA). Residues 208–236 (RTLHYLWRTVDPVAAGSGSQRAKRKVTRM) lie on the Cytoplasmic side of the membrane. A helical membrane pass occupies residues 237-257 (IVIVAVLFCLCWMPHHALILC). Residues 258 to 259 (VW) lie on the Extracellular side of the membrane. The helical transmembrane segment at 260–280 (FGRFPLTRATYALRILSHLVS) threads the bilayer. At 281 to 371 (YANSCVNPIV…TLSRTLDPAC (91 aa)) the chain is on the cytoplasmic side.

The protein belongs to the G-protein coupled receptor 1 family.

The protein resides in the cell membrane. Functionally, receptor for the hormone galanin, GALP and spexin-1. The activity of this receptor is mediated by G proteins that activate the phospholipase C/protein kinase C pathway (via G(q)) and that inhibit adenylyl cyclase (via G(i)). This Mus musculus (Mouse) protein is Galanin receptor type 2 (Galr2).